The primary structure comprises 64 residues: U6-theraphotoxin-Cg1a (64 aa).

The first 20 residues, 1-20 (MTRKILAVLLVFTLVACNNA), serve as a signal peptide directing secretion. A propeptide spanning residues 21-38 (EKYSETDVEDSPMIQERR) is cleaved from the precursor. 3 cysteine pairs are disulfide-bonded: C39–C55, C46–C58, and C54–C63.

Belongs to the neurotoxin 36 family. 02 subfamily. In terms of tissue distribution, expressed by the venom gland.

It localises to the secreted. Probable ion channel inhibitor. The polypeptide is U6-theraphotoxin-Cg1a (Chilobrachys guangxiensis (Chinese earth tiger tarantula)).